Reading from the N-terminus, the 85-residue chain is U4-theraphotoxin-Hhn1e (85 aa).

Positions Met1–Ala22 are cleaved as a signal peptide. A propeptide spanning residues Glu23–Arg48 is cleaved from the precursor. 3 disulfides stabilise this stretch: Cys52-Cys66, Cys56-Cys77, and Cys71-Cys82.

Belongs to the neurotoxin 12 (Hwtx-2) family. 02 (Hwtx-2) subfamily. In terms of tissue distribution, expressed by the venom gland.

It localises to the secreted. In terms of biological role, postsynaptic neurotoxin. This chain is U4-theraphotoxin-Hhn1e, found in Cyriopagopus hainanus (Chinese bird spider).